Consider the following 503-residue polypeptide: Cytochrome P450 3A17 (503 aa).

Residue Cys442 participates in heme binding.

Belongs to the cytochrome P450 family. It depends on heme as a cofactor.

The protein resides in the endoplasmic reticulum membrane. It is found in the microsome membrane. The catalysed reaction is an organic molecule + reduced [NADPH--hemoprotein reductase] + O2 = an alcohol + oxidized [NADPH--hemoprotein reductase] + H2O + H(+). Functionally, cytochromes P450 are a group of heme-thiolate monooxygenases. In liver microsomes, this enzyme is involved in an NADPH-dependent electron transport pathway. It oxidizes a variety of structurally unrelated compounds, including steroids, fatty acids, and xenobiotics. The polypeptide is Cytochrome P450 3A17 (CYP3A17) (Cavia porcellus (Guinea pig)).